The sequence spans 220 residues: Deoxyribose-phosphate aldolase 1 (220 aa).

Catalysis depends on aspartate 89, which acts as the Proton donor/acceptor. The Schiff-base intermediate with acetaldehyde role is filled by lysine 151. Lysine 180 acts as the Proton donor/acceptor in catalysis.

Belongs to the DeoC/FbaB aldolase family. DeoC type 1 subfamily.

The protein localises to the cytoplasm. It catalyses the reaction 2-deoxy-D-ribose 5-phosphate = D-glyceraldehyde 3-phosphate + acetaldehyde. Its pathway is carbohydrate degradation; 2-deoxy-D-ribose 1-phosphate degradation; D-glyceraldehyde 3-phosphate and acetaldehyde from 2-deoxy-alpha-D-ribose 1-phosphate: step 2/2. Its function is as follows. Catalyzes a reversible aldol reaction between acetaldehyde and D-glyceraldehyde 3-phosphate to generate 2-deoxy-D-ribose 5-phosphate. The polypeptide is Deoxyribose-phosphate aldolase 1 (Staphylococcus aureus (strain COL)).